The chain runs to 143 residues: Lysozyme C (143 aa).

The signal sequence occupies residues 1-15; the sequence is MRCLLLLLLVPVPGA. The 128-residue stretch at 16-143 folds into the C-type lysozyme domain; it reads KVFERCEWAR…LSSYVAGCGV (128 aa). Intrachain disulfides connect Cys21/Cys141, Cys45/Cys129, Cys79/Cys94, and Cys90/Cys108. Active-site residues include Glu50 and Asp67.

Belongs to the glycosyl hydrolase 22 family. As to quaternary structure, monomer.

The protein resides in the secreted. The catalysed reaction is Hydrolysis of (1-&gt;4)-beta-linkages between N-acetylmuramic acid and N-acetyl-D-glucosamine residues in a peptidoglycan and between N-acetyl-D-glucosamine residues in chitodextrins.. Functionally, lysozymes have primarily a bacteriolytic function; those in tissues and body fluids are associated with the monocyte-macrophage system and enhance the activity of immunoagents. This Scophthalmus maximus (Turbot) protein is Lysozyme C (lys).